The following is a 347-amino-acid chain: Isopentenyl-diphosphate delta-isomerase (347 aa).

Residue 11-12 (RK) participates in substrate binding. FMN contacts are provided by residues 72 to 74 (AMT), serine 102, and asparagine 131. Residue glutamine 161 coordinates substrate. Glutamate 162 lines the Mg(2+) pocket. FMN is bound by residues lysine 192, threonine 222, and 287-288 (AG).

The protein belongs to the IPP isomerase type 2 family. As to quaternary structure, homooctamer. Dimer of tetramers. The cofactor is FMN. NADPH is required as a cofactor. Requires Mg(2+) as cofactor.

Its subcellular location is the cytoplasm. The catalysed reaction is isopentenyl diphosphate = dimethylallyl diphosphate. Involved in the biosynthesis of isoprenoids. Catalyzes the 1,3-allylic rearrangement of the homoallylic substrate isopentenyl (IPP) to its allylic isomer, dimethylallyl diphosphate (DMAPP). In Lactococcus lactis subsp. lactis (strain IL1403) (Streptococcus lactis), this protein is Isopentenyl-diphosphate delta-isomerase.